A 122-amino-acid polypeptide reads, in one-letter code: UPF0102 protein Mpe_A3766 (122 aa).

Belongs to the UPF0102 family.

In Methylibium petroleiphilum (strain ATCC BAA-1232 / LMG 22953 / PM1), this protein is UPF0102 protein Mpe_A3766.